A 212-amino-acid polypeptide reads, in one-letter code: MDALTRERTLIGSDDTTGLDLEPVQRPSKDEAMAAVRTLLAWAGDNPEREGLIDTPKRVVEAFDEWFAGYHGDPAKELSRTFEDVQGYDDMVMLRGIDVQSHCEHHMAPFLGKAWIAYMPTGKVVGLSKLARLVEIFAKRLQTQETMTMQIADAIEDHLSAAGVAVLIDAEHQCMSTRGVHHHDVSTITTQFRGVFKTDKVLQQRFMDLVKK.

The Zn(2+) site is built by Cys103, His106, and Cys174.

This sequence belongs to the GTP cyclohydrolase I family. In terms of assembly, toroid-shaped homodecamer, composed of two pentamers of five dimers.

It catalyses the reaction GTP + H2O = 7,8-dihydroneopterin 3'-triphosphate + formate + H(+). Its pathway is cofactor biosynthesis; 7,8-dihydroneopterin triphosphate biosynthesis; 7,8-dihydroneopterin triphosphate from GTP: step 1/1. The polypeptide is GTP cyclohydrolase 1 (Caulobacter vibrioides (strain ATCC 19089 / CIP 103742 / CB 15) (Caulobacter crescentus)).